The chain runs to 306 residues: Curved DNA-binding protein (306 aa).

In terms of domain architecture, J spans 5–69 (DYYAIMGVKP…QRRAEYDQMW (65 aa)).

It is found in the cytoplasm. The protein resides in the nucleoid. DNA-binding protein that preferentially recognizes a curved DNA sequence. It is probably a functional analog of DnaJ; displays overlapping activities with DnaJ, but functions under different conditions, probably acting as a molecular chaperone in an adaptive response to environmental stresses other than heat shock. Lacks autonomous chaperone activity; binds native substrates and targets them for recognition by DnaK. Its activity is inhibited by the binding of CbpM. The protein is Curved DNA-binding protein of Escherichia coli O157:H7.